Consider the following 938-residue polypeptide: Isoleucine--tRNA ligase (938 aa).

The 'HIGH' region signature appears at 58 to 68; it reads PYANGHLHMGH. Glutamate 566 serves as a coordination point for L-isoleucyl-5'-AMP. The short motif at 607–611 is the 'KMSKS' region element; that stretch reads KMSKS. An ATP-binding site is contributed by lysine 610. Residues cysteine 906, cysteine 909, cysteine 926, and cysteine 929 each contribute to the Zn(2+) site.

The protein belongs to the class-I aminoacyl-tRNA synthetase family. IleS type 1 subfamily. In terms of assembly, monomer. Requires Zn(2+) as cofactor.

Its subcellular location is the cytoplasm. The catalysed reaction is tRNA(Ile) + L-isoleucine + ATP = L-isoleucyl-tRNA(Ile) + AMP + diphosphate. In terms of biological role, catalyzes the attachment of isoleucine to tRNA(Ile). As IleRS can inadvertently accommodate and process structurally similar amino acids such as valine, to avoid such errors it has two additional distinct tRNA(Ile)-dependent editing activities. One activity is designated as 'pretransfer' editing and involves the hydrolysis of activated Val-AMP. The other activity is designated 'posttransfer' editing and involves deacylation of mischarged Val-tRNA(Ile). This Desulfovibrio desulfuricans (strain ATCC 27774 / DSM 6949 / MB) protein is Isoleucine--tRNA ligase.